We begin with the raw amino-acid sequence, 87 residues long: Small ribosomal subunit protein bS20 (87 aa).

The disordered stretch occupies residues 1–27 (MANIKSAKKRAIQSEKRRQHNASRRSM).

This sequence belongs to the bacterial ribosomal protein bS20 family.

In terms of biological role, binds directly to 16S ribosomal RNA. The sequence is that of Small ribosomal subunit protein bS20 from Aeromonas salmonicida (strain A449).